Here is a 91-residue protein sequence, read N- to C-terminus: Small ribosomal subunit protein uS19 (91 aa).

This sequence belongs to the universal ribosomal protein uS19 family.

Its function is as follows. Protein S19 forms a complex with S13 that binds strongly to the 16S ribosomal RNA. The sequence is that of Small ribosomal subunit protein uS19 from Hahella chejuensis (strain KCTC 2396).